We begin with the raw amino-acid sequence, 34 residues long: Dermaseptin-S2 (34 aa).

It belongs to the frog skin active peptide (FSAP) family. Dermaseptin subfamily. As to expression, expressed by the skin glands.

The protein resides in the secreted. In terms of biological role, potent antimicrobial peptide with activity against bacteria and protozoa. Also has activity against fungi. Probably acts by disturbing membrane functions with its amphipathic structure. The chain is Dermaseptin-S2 from Phyllomedusa sauvagei (Sauvage's leaf frog).